Consider the following 312-residue polypeptide: Olfactory receptor 2M7 (312 aa).

The Extracellular segment spans residues 1-25 (MAWENQTFNSDFLLLGIFNHSPTHT). The N-linked (GlcNAc...) asparagine glycan is linked to Asn-5. Residues 26-49 (FLFFLVLAIFSVAFMGNSIMVLLI) traverse the membrane as a helical segment. At 50–57 (YLDTQLHT) the chain is on the cytoplasmic side. Residues 58–79 (PMYFLLSQLSLMDLMLICTTVP) form a helical membrane-spanning segment. Residues 80 to 100 (KMAFNYLSGSKSISMAGCATQ) are Extracellular-facing. An intrachain disulfide couples Cys-97 to Cys-189. A helical transmembrane segment spans residues 101-120 (IFFYISLLGSECFLLAVMSY). Residues 121–139 (DRYTAICHPLRYTNLMRPK) lie on the Cytoplasmic side of the membrane. Residues 140-158 (ICGLMTAFSWILGSTDGII) form a helical membrane-spanning segment. Residues 159–195 (DAVATFSFSYCGSREIAHFCCDFPSLLILSCNDTSIF) are Extracellular-facing. A helical transmembrane segment spans residues 196-219 (EEVIFICCIVMLVFPVAIIITSYA). The Cytoplasmic portion of the chain corresponds to 220–236 (RVILAVIHMGSGEGRRK). A helical transmembrane segment spans residues 237–259 (AFTTCSSHLMVVGMYYGAGLFMC). The Extracellular segment spans residues 260 to 272 (IQPTSHHSPMQDK). The chain crosses the membrane as a helical span at residues 273–292 (MVSVFYTIVTPMLNPLIYSL). Topologically, residues 293 to 311 (RNKEVTRALMKILGKGKSG) are cytoplasmic.

The protein belongs to the G-protein coupled receptor 1 family.

Its subcellular location is the cell membrane. Odorant receptor. In Homo sapiens (Human), this protein is Olfactory receptor 2M7 (OR2M7).